Consider the following 153-residue polypeptide: UPF0756 membrane protein LCABL_15860 (153 aa).

4 helical membrane-spanning segments follow: residues 4 to 24 (WLFL…SLII), 52 to 72 (WGVT…EIGF), 85 to 105 (WIAI…VGLL), and 115 to 135 (LVFG…GPVI).

The protein belongs to the UPF0756 family.

It is found in the cell membrane. This is UPF0756 membrane protein LCABL_15860 from Lacticaseibacillus casei (strain BL23) (Lactobacillus casei).